The chain runs to 427 residues: Histidine--tRNA ligase (427 aa).

Belongs to the class-II aminoacyl-tRNA synthetase family. Homodimer.

It localises to the cytoplasm. The enzyme catalyses tRNA(His) + L-histidine + ATP = L-histidyl-tRNA(His) + AMP + diphosphate + H(+). In Mycobacterium leprae (strain TN), this protein is Histidine--tRNA ligase (hisS).